Reading from the N-terminus, the 443-residue chain is Ribosomal protein uS12 methylthiotransferase RimO (443 aa).

The MTTase N-terminal domain maps to 8 to 118; it reads PKIGFVSLGC…VLSHIHHYVP (111 aa). Residues cysteine 17, cysteine 53, cysteine 82, cysteine 150, cysteine 154, and cysteine 157 each contribute to the [4Fe-4S] cluster site. Residues 136–373 enclose the Radical SAM core domain; that stretch reads LTPRHYAYLK…MQLQQQISTE (238 aa). In terms of domain architecture, TRAM spans 376–442; sequence QEKIGKVLPV…EYDLWGTIVE (67 aa).

This sequence belongs to the methylthiotransferase family. RimO subfamily. It depends on [4Fe-4S] cluster as a cofactor.

The protein resides in the cytoplasm. It catalyses the reaction L-aspartate(89)-[ribosomal protein uS12]-hydrogen + (sulfur carrier)-SH + AH2 + 2 S-adenosyl-L-methionine = 3-methylsulfanyl-L-aspartate(89)-[ribosomal protein uS12]-hydrogen + (sulfur carrier)-H + 5'-deoxyadenosine + L-methionine + A + S-adenosyl-L-homocysteine + 2 H(+). Its function is as follows. Catalyzes the methylthiolation of an aspartic acid residue of ribosomal protein uS12. In Proteus mirabilis (strain HI4320), this protein is Ribosomal protein uS12 methylthiotransferase RimO.